The chain runs to 503 residues: MKWLKRLTVIVGTFYRYRLAGLCASLMGSGWICALLKMMPQSSKLKNEPPAVRLRLALESLGPIFIKFGQVLSTRPDLIPHDYAVELAKLQDKVPPFDARLSREQIEKSLGQSIEKLYAEFETEPIASASIAQVHKARLHSGEQVAVKVLRPNLLPVIEQDLSLMRFGAGWVERLFADGKRLKPREVVAEFDKYLHDELDLMREAANASQLGRNFQNSDMLIVPKVFYDYCTSDVLTIEWMDGTPVSDIAKLKADGIDLHKLADYGVEIFFTQVFRDGFFHADMHPGNILVAADNRYIALDFGIVGTLTDYDKRYLAINFLAFFNRDYRRVATAHIESGWVPADTRAEELEAAVRAVCEPVFNKPISQISFGLVLMRLFEVSRRFNVEIQPQLVLLQKTLLNIEGLGRQLDPDLDLWKTAKPFLVKWMNGQVGPKALWRNLKNEAPDWAQIIPSLPRKISALIDENRQQEMRDAYIHLVKVQQRQSLWLAVIAVVLLLILLLK.

A helical transmembrane segment spans residues 13–35 (TFYRYRLAGLCASLMGSGWICAL). The Protein kinase domain maps to 120 to 491 (EFETEPIASA…QQRQSLWLAV (372 aa)). Residues 126-134 (IASASIAQV) and Lys148 contribute to the ATP site. The Proton acceptor role is filled by Asp283. The chain crosses the membrane as a helical span at residues 485 to 502 (QSLWLAVIAVVLLLILLL).

Belongs to the ABC1 family. UbiB subfamily.

Its subcellular location is the cell inner membrane. It participates in cofactor biosynthesis; ubiquinone biosynthesis [regulation]. Is probably a protein kinase regulator of UbiI activity which is involved in aerobic coenzyme Q (ubiquinone) biosynthesis. The chain is Probable protein kinase UbiB from Neisseria meningitidis serogroup B (strain ATCC BAA-335 / MC58).